The primary structure comprises 550 residues: Flagellin (550 aa).

The protein belongs to the bacterial flagellin family.

The protein resides in the secreted. Its subcellular location is the bacterial flagellum. Its function is as follows. Flagellin is the subunit protein which polymerizes to form the filaments of bacterial flagella. The protein is Flagellin (fliC) of Shigella flexneri.